Here is a 419-residue protein sequence, read N- to C-terminus: MDKLTIQASPPLAGDVIISGAKNAALPILMAGVLAETDFVVSNVPNLRDVTTSCKLLRCLGAEVTELGDGQIRISTTNLNEFCAPYDLVKTMRASILILGPLLARYGTADVSLPGGCAIGARPVNLHLHGLEMMGAKIEVKEGYIKARVDGRLKGAHIFMDMVSVGATENLLMAAALADGETVIENAAREPEVIDLANCLIAMGAKITGVGSATLRIQGVERLQGCNYRVMPDRIETGSFLVAAAVTRGRIRCLKADPASLESVIAKLEDAGAKITTGEDWIELDMQGKRPKAVNIKTAPYPGFPTDMQAQFCVLNALAQGTATITETIFENRFMHVPELIRMGATMELEGNTCIIQGIESLSGAQVMATDLRASASLVIAGLVADGKTIVDRIYHLDRGYEHIENKFQGLGAQVVRTQ.

22-23 (KN) is a binding site for phosphoenolpyruvate. UDP-N-acetyl-alpha-D-glucosamine is bound at residue Arg-93. Residue Cys-117 is the Proton donor of the active site. A 2-(S-cysteinyl)pyruvic acid O-phosphothioketal modification is found at Cys-117. UDP-N-acetyl-alpha-D-glucosamine-binding residues include Asp-307 and Ile-329.

Belongs to the EPSP synthase family. MurA subfamily.

It localises to the cytoplasm. It carries out the reaction phosphoenolpyruvate + UDP-N-acetyl-alpha-D-glucosamine = UDP-N-acetyl-3-O-(1-carboxyvinyl)-alpha-D-glucosamine + phosphate. It participates in cell wall biogenesis; peptidoglycan biosynthesis. Functionally, cell wall formation. Adds enolpyruvyl to UDP-N-acetylglucosamine. This Shewanella baltica (strain OS195) protein is UDP-N-acetylglucosamine 1-carboxyvinyltransferase.